Reading from the N-terminus, the 38-residue chain is Plastocyanin (38 aa).

The Plastocyanin-like domain occupies 1-38 (AQTVEVKMGADGGLLVFEPAKAGPHNVVFDEDNIPPGV). Residue His25 coordinates Cu cation.

This sequence belongs to the plastocyanin family. It depends on Cu(2+) as a cofactor.

The protein localises to the plastid. The protein resides in the chloroplast thylakoid membrane. Functionally, participates in electron transfer between P700 and the cytochrome b6-f complex in photosystem I. This is Plastocyanin (PETE) from Thalassiosira oceanica (Marine diatom).